Here is a 435-residue protein sequence, read N- to C-terminus: Transforming growth factor beta-2 proprotein (435 aa).

Positions 1 to 20 are cleaved as a signal peptide; sequence MHYCVLSAFLLLHLVTVALS. N-linked (GlcNAc...) asparagine glycans are attached at residues asparagine 72, asparagine 140, and asparagine 241. Disulfide bonds link cysteine 309–cysteine 318, cysteine 317–cysteine 380, cysteine 346–cysteine 411, and cysteine 350–cysteine 413.

It belongs to the TGF-beta family. As to quaternary structure, interacts with the serine proteases, HTRA1 and HTRA3. Interacts with ASPN. Interacts with MFAP5. In terms of assembly, interacts with Transforming growth factor beta-2 (TGF-beta-2) chain; interaction is non-covalent and maintains (TGF-beta-2) in a latent state. Interacts with LRRC32/GARP; leading to regulate activation of TGF-beta-2. Interacts with NREP; the interaction results in a decrease in TGFB2 autoinduction. Transforming growth factor beta-2: Homodimer; disulfide-linked. Transforming growth factor beta-2: Interacts with TGF-beta receptors (TGFBR1 and TGFBR2), leading to signal transduction. Post-translationally, the precursor proprotein is cleaved in the Golgi apparatus to form Transforming growth factor beta-2 (TGF-beta-2) and Latency-associated peptide (LAP) chains, which remain non-covalently linked, rendering TGF-beta-2 inactive.

Its subcellular location is the secreted. It is found in the extracellular space. The protein localises to the extracellular matrix. In terms of biological role, precursor of the Latency-associated peptide (LAP) and Transforming growth factor beta-2 (TGF-beta-2) chains, which constitute the regulatory and active subunit of TGF-beta-2, respectively. Functionally, required to maintain the Transforming growth factor beta-2 (TGF-beta-2) chain in a latent state during storage in extracellular matrix. Associates non-covalently with TGF-beta-2 and regulates its activation via interaction with 'milieu molecules', such as LTBP1 and LRRC32/GARP, that control activation of TGF-beta-2. Its function is as follows. Multifunctional protein that regulates various processes such as angiogenesis and heart development. Activation into mature form follows different steps: following cleavage of the proprotein in the Golgi apparatus, Latency-associated peptide (LAP) and Transforming growth factor beta-2 (TGF-beta-2) chains remain non-covalently linked rendering TGF-beta-2 inactive during storage in extracellular matrix. At the same time, LAP chain interacts with 'milieu molecules', such as LTBP1 and LRRC32/GARP, that control activation of TGF-beta-2 and maintain it in a latent state during storage in extracellular milieus. Once activated following release of LAP, TGF-beta-2 acts by binding to TGF-beta receptors (TGFBR1 and TGFBR2), which transduce signal. This Sus scrofa (Pig) protein is Transforming growth factor beta-2 proprotein (TGFB2).